The following is a 202-amino-acid chain: UPF0102 protein Dde_1093 (202 aa).

This sequence belongs to the UPF0102 family.

The sequence is that of UPF0102 protein Dde_1093 from Oleidesulfovibrio alaskensis (strain ATCC BAA-1058 / DSM 17464 / G20) (Desulfovibrio alaskensis).